The primary structure comprises 30 residues: Photosystem I reaction center subunit XII (30 aa).

Residues 7–26 form a helical membrane-spanning segment; the sequence is IFVALLFALVSAVLAIRLGT.

The protein belongs to the PsaM family.

It is found in the plastid. The protein resides in the chloroplast thylakoid membrane. The sequence is that of Photosystem I reaction center subunit XII from Gracilaria tenuistipitata var. liui (Red alga).